We begin with the raw amino-acid sequence, 537 residues long: MFKREEIIEMANKDFEKAWIETKDLIKAKKVNESYPRIKPVFGKTHPVNDTIENLRQAYLRMGFEEYINPVIVDERDIYKQFGPEAMAVLDRCFYLAGLPRPDVGLSDEKISQIEKLGIKVSEHKESLQKILHGYKKGTLDGDDLVLEISNALEISSEMGLKILEEVFPEFKDLTAVSSKLTLRSHMTSGWFLTVSDLMNKKPLPFKLFSIDRCFRREQKEDKSHLMTYHSASCAIAGEGVDINDGKAIAEGLLSQFGFTNFKFIPDEKKSKYYTPETQTEVYAYHPKLKEWLEVATFGVYSPVALSKYGIDVPVMNLGLGVERLAMISGNFADVREMVYPQFYEHKLDDRAVASMVKLDKVPVMDEIYDLTKELIDSCVKNKDLKSPCELTIEKTFSFGKTKKNVKINIFEKEEGKNLLGPSILNEIYVYDGNVIGIPESFDGVKEEFKEFLEKGKSEGVATSIRYIDALCFKLTSKLEEAIVTNTSEFKVKVPIVRSLSDINLKIDDIALKQIMSKNKVIDVRGPVFLNVEVKIE.

Substrate contacts are provided by residues His186–Thr188, Ser231–Ser233, Tyr273–Tyr274, and Asn317.

Belongs to the class-II aminoacyl-tRNA synthetase family. O-phosphoseryl-tRNA(Cys) synthetase subfamily. Homotetramer. Interacts with SepCysS.

The enzyme catalyses tRNA(Cys) + O-phospho-L-serine + ATP = O-phospho-L-seryl-tRNA(Cys) + AMP + diphosphate. Catalyzes the attachment of O-phosphoserine (Sep) to tRNA(Cys). The protein is O-phosphoserine--tRNA(Cys) ligase of Methanococcus maripaludis (strain C7 / ATCC BAA-1331).